The primary structure comprises 296 residues: NAD kinase (296 aa).

Residue Asp-72 is the Proton acceptor of the active site. Residues 72-73 (DG), 146-147 (ND), Arg-157, Lys-174, Asp-176, 187-192 (TAYALS), and Gln-247 contribute to the NAD(+) site.

This sequence belongs to the NAD kinase family. Requires a divalent metal cation as cofactor.

The protein localises to the cytoplasm. It carries out the reaction NAD(+) + ATP = ADP + NADP(+) + H(+). In terms of biological role, involved in the regulation of the intracellular balance of NAD and NADP, and is a key enzyme in the biosynthesis of NADP. Catalyzes specifically the phosphorylation on 2'-hydroxyl of the adenosine moiety of NAD to yield NADP. In Pseudomonas fluorescens (strain SBW25), this protein is NAD kinase.